The chain runs to 124 residues: Multifunctional methyltransferase subunit TRM112 homolog B (124 aa).

The region spanning 2–120 (RLIVHNMLSC…SKGIPNMLLH (119 aa)) is the TRM112 domain.

Belongs to the TRM112 family. As to quaternary structure, interacts with TRM9. As to expression, expressed in anthers.

Acts as an activator of both rRNA/tRNA and protein methyltransferases. Required for TRM9 tRNA methyltransferase activity. This Arabidopsis thaliana (Mouse-ear cress) protein is Multifunctional methyltransferase subunit TRM112 homolog B.